Reading from the N-terminus, the 259-residue chain is Bisphosphoglycerate mutase (259 aa).

Position 2 is an N-acetylserine (S2). 2 N-linked (Glc) (glycation) lysine; in vitro glycosylation sites follow: K3 and K5. 10 to 17 is a substrate binding site; it reads RHGEGAWN. The active-site Tele-phosphohistidine intermediate is the H11. The N-linked (Glc) (glycation) lysine; in vitro glycan is linked to K18. A substrate-binding site is contributed by 23 to 24; it reads CS. N-linked (Glc) (glycation) lysine; in vitro glycosylation occurs at K43. Residues R62, 89–92, R100, and 116–117 contribute to the substrate site; these read ERHY and RR. Catalysis depends on E89, which acts as the Proton donor/acceptor. T122 carries the phosphothreonine modification. An N-linked (Glc) (glycation) lysine glycan is attached at K159. 189-190 serves as a coordination point for substrate; it reads GN. K197 is a glycosylation site (N-linked (Glc) (glycation) lysine; in vitro).

It belongs to the phosphoglycerate mutase family. BPG-dependent PGAM subfamily. As to quaternary structure, homodimer. Post-translationally, glycation of Lys-159 in diabetic patients inactivates the enzyme. As to expression, expressed in red blood cells. Expressed in non-erythroid cells of the placenta; present in the syncytiotrophoblast layer of the placental villi at the feto-maternal interface (at protein level).

It carries out the reaction (2R)-3-phospho-glyceroyl phosphate = (2R)-2,3-bisphosphoglycerate + H(+). It catalyses the reaction (2R)-2-phosphoglycerate = (2R)-3-phosphoglycerate. At alkaline pH BPGM favors the synthase reaction; however, at lower pH the phosphatase reaction is dominant. Inhibited by citrate. Its function is as follows. Plays a major role in regulating hemoglobin oxygen affinity by controlling the levels of its allosteric effector 2,3-bisphosphoglycerate (2,3-BPG). Also exhibits mutase (EC 5.4.2.11) activity. The chain is Bisphosphoglycerate mutase (BPGM) from Homo sapiens (Human).